The chain runs to 469 residues: Serine hydroxymethyltransferase, cytosolic (469 aa).

T20 is subject to Phosphothreonine. Phosphoserine is present on S26. K248 bears the N6-(pyridoxal phosphate)lysine mark. S429 is modified (phosphoserine). Residue K456 forms a Glycyl lysine isopeptide (Lys-Gly) (interchain with G-Cter in ubiquitin) linkage.

It belongs to the SHMT family. Homotetramer. The cofactor is pyridoxal 5'-phosphate.

It is found in the cytoplasm. It catalyses the reaction (6R)-5,10-methylene-5,6,7,8-tetrahydrofolate + glycine + H2O = (6S)-5,6,7,8-tetrahydrofolate + L-serine. The protein operates within one-carbon metabolism; tetrahydrofolate interconversion. Interconversion of serine and glycine. This is Serine hydroxymethyltransferase, cytosolic from Saccharomyces cerevisiae (strain ATCC 204508 / S288c) (Baker's yeast).